A 161-amino-acid polypeptide reads, in one-letter code: Large ribosomal subunit protein uL10 (161 aa).

It belongs to the universal ribosomal protein uL10 family. Part of the ribosomal stalk of the 50S ribosomal subunit. The N-terminus interacts with L11 and the large rRNA to form the base of the stalk. The C-terminus forms an elongated spine to which L12 dimers bind in a sequential fashion forming a multimeric L10(L12)X complex.

Forms part of the ribosomal stalk, playing a central role in the interaction of the ribosome with GTP-bound translation factors. This chain is Large ribosomal subunit protein uL10, found in Campylobacter curvus (strain 525.92).